Reading from the N-terminus, the 108-residue chain is Ig kappa chain V-V region EPC 109 (108 aa).

Positions 1-23 are framework-1; it reads DVQMIQSPSSLSASLGDIVTMTC. Cysteine 23 and cysteine 88 are disulfide-bonded. The interval 24–34 is complementarity-determining-1; that stretch reads QASQGTNINLN. Residues 35 to 49 form a framework-2 region; it reads WFQQKPGKAPKLLIY. The interval 50–56 is complementarity-determining-2; the sequence is GASILEA. A framework-3 region spans residues 57–88; sequence GVPSRFSGRRYGTDFTLTISSLEDEDMATYFC. A complementarity-determining-3 region spans residues 89–97; the sequence is LQHSYLPYT. The interval 98–108 is framework-4; that stretch reads FGGGTKLEKKR.

The protein is Ig kappa chain V-V region EPC 109 of Mus musculus (Mouse).